We begin with the raw amino-acid sequence, 276 residues long: ADP-dependent (S)-NAD(P)H-hydrate dehydratase (276 aa).

The 268-residue stretch at 7–274 (METLNSINIP…NEIPYAMKQL (268 aa)) folds into the YjeF C-terminal domain. Residues Ala42, Gly105, and His154 each coordinate (6S)-NADPHX. Gly216 serves as a coordination point for AMP. Asp217 contributes to the (6S)-NADPHX binding site.

Belongs to the NnrD/CARKD family. Homotetramer. It depends on Mg(2+) as a cofactor.

The enzyme catalyses (6S)-NADHX + ADP = AMP + phosphate + NADH + H(+). It carries out the reaction (6S)-NADPHX + ADP = AMP + phosphate + NADPH + H(+). Its function is as follows. Catalyzes the dehydration of the S-form of NAD(P)HX at the expense of ADP, which is converted to AMP. Together with NAD(P)HX epimerase, which catalyzes the epimerization of the S- and R-forms, the enzyme allows the repair of both epimers of NAD(P)HX, a damaged form of NAD(P)H that is a result of enzymatic or heat-dependent hydration. This Staphylococcus aureus (strain NCTC 8325 / PS 47) protein is ADP-dependent (S)-NAD(P)H-hydrate dehydratase.